The following is a 307-amino-acid chain: Ribonuclease Z (307 aa).

7 residues coordinate Zn(2+): His63, His65, Asp67, His68, His141, Asp212, and His270. The active-site Proton acceptor is the Asp67.

The protein belongs to the RNase Z family. In terms of assembly, homodimer. Zn(2+) is required as a cofactor.

It catalyses the reaction Endonucleolytic cleavage of RNA, removing extra 3' nucleotides from tRNA precursor, generating 3' termini of tRNAs. A 3'-hydroxy group is left at the tRNA terminus and a 5'-phosphoryl group is left at the trailer molecule.. Zinc phosphodiesterase, which displays some tRNA 3'-processing endonuclease activity. Probably involved in tRNA maturation, by removing a 3'-trailer from precursor tRNA. The chain is Ribonuclease Z from Bacillus cereus (strain ATCC 14579 / DSM 31 / CCUG 7414 / JCM 2152 / NBRC 15305 / NCIMB 9373 / NCTC 2599 / NRRL B-3711).